The chain runs to 186 residues: Dual-action ribosomal maturation protein DarP (186 aa).

This sequence belongs to the DarP family.

Its subcellular location is the cytoplasm. Its function is as follows. Member of a network of 50S ribosomal subunit biogenesis factors which assembles along the 30S-50S interface, preventing incorrect 23S rRNA structures from forming. Promotes peptidyl transferase center (PTC) maturation. In Proteus mirabilis (strain HI4320), this protein is Dual-action ribosomal maturation protein DarP.